The primary structure comprises 33 residues: Photosystem II reaction center protein T (33 aa).

A helical membrane pass occupies residues 3–23 (ALVYTFLLVSTLGILFFSIFF).

Belongs to the PsbT family. In terms of assembly, PSII is composed of 1 copy each of membrane proteins PsbA, PsbB, PsbC, PsbD, PsbE, PsbF, PsbH, PsbI, PsbJ, PsbK, PsbL, PsbM, PsbT, PsbY, PsbZ, Psb30/Ycf12, at least 3 peripheral proteins of the oxygen-evolving complex and a large number of cofactors. It forms dimeric complexes.

The protein localises to the plastid. It localises to the chloroplast thylakoid membrane. Its function is as follows. Found at the monomer-monomer interface of the photosystem II (PS II) dimer, plays a role in assembly and dimerization of PSII. PSII is a light-driven water plastoquinone oxidoreductase, using light energy to abstract electrons from H(2)O, generating a proton gradient subsequently used for ATP formation. This is Photosystem II reaction center protein T from Pelargonium hortorum (Common geranium).